The chain runs to 526 residues: 3-hydroxy-3-methylglutaryl-coenzyme A reductase 2 (526 aa).

Active-site charge relay system residues include Glu-193, Lys-325, and Asp-401. Residue His-499 is the Proton donor of the active site. Residues Asn-503–Asp-526 form a disordered region. Over residues Asp-514–Asp-526 the composition is skewed to polar residues.

This sequence belongs to the HMG-CoA reductase family.

It catalyses the reaction (R)-mevalonate + 2 NADP(+) + CoA = (3S)-3-hydroxy-3-methylglutaryl-CoA + 2 NADPH + 2 H(+). The protein operates within metabolic intermediate biosynthesis; (R)-mevalonate biosynthesis; (R)-mevalonate from acetyl-CoA: step 3/3. This transmembrane glycoprotein is involved in the control of cholesterol biosynthesis. It is the rate-limiting enzyme of the sterol biosynthesis. In Dictyostelium discoideum (Social amoeba), this protein is 3-hydroxy-3-methylglutaryl-coenzyme A reductase 2 (hmgB).